The following is a 52-amino-acid chain: Ribosome modulation factor (52 aa).

Belongs to the ribosome modulation factor family.

It is found in the cytoplasm. Functionally, during stationary phase, converts 70S ribosomes to an inactive dimeric form (100S ribosomes). This Xenorhabdus nematophila (strain ATCC 19061 / DSM 3370 / CCUG 14189 / LMG 1036 / NCIMB 9965 / AN6) protein is Ribosome modulation factor.